We begin with the raw amino-acid sequence, 40 residues long: uncharacterized protein (40 aa).

An N-terminal signal peptide occupies residues 1–27 (MFPADVILQCFGFSVGIALVGYVISLF).

This is an uncharacterized protein from Archaeoglobus fulgidus (strain ATCC 49558 / DSM 4304 / JCM 9628 / NBRC 100126 / VC-16).